The chain runs to 271 residues: Integral membrane protein 2C (271 aa).

Thr-41 bears the Phosphothreonine mark. A helical; Signal-anchor for type II membrane protein transmembrane segment spans residues Val-59–Ala-79. The BRICHOS domain occupies Phe-140–Leu-234. Cys-167 and Cys-226 are oxidised to a cystine. N-linked (GlcNAc...) asparagine glycosylation is present at Asn-173.

The protein belongs to the ITM2 family. Interacts with BACE1. Interacts with APP. Interacts with STMN2. In terms of processing, type I membrane-bound, as well as soluble, furin has a pre-eminent role in ITM2C proteolytic processing. PCSK7 and PCSK5 may also be involved although to a lesser extent. The soluble form of PCSK7 is incapable of processing ITM2C. Fails to undergo shedding by ADAM10 and intramembrane cleavage by SPPL2B.

Its subcellular location is the lysosome membrane. The protein resides in the cell membrane. Negative regulator of amyloid-beta peptide production. May inhibit the processing of APP by blocking its access to alpha- and beta-secretase. Binding to the beta-secretase-cleaved APP C-terminal fragment is negligible, suggesting that ITM2C is a poor gamma-secretase cleavage inhibitor. May play a role in TNF-induced cell death and neuronal differentiation. The protein is Integral membrane protein 2C (ITM2C) of Bos taurus (Bovine).